The chain runs to 132 residues: Fatty acid-binding protein 1 (132 aa).

A fatty acid contacts are provided by residues arginine 106 and 128 to 130 (RYY).

It belongs to the calycin superfamily. Fatty-acid binding protein (FABP) family. In terms of assembly, monomer. In terms of tissue distribution, midgut.

Its subcellular location is the cytoplasm. Binds fatty acids in a 1:1 molar ratio. The polypeptide is Fatty acid-binding protein 1 (MFB1) (Manduca sexta (Tobacco hawkmoth)).